The chain runs to 91 residues: Small ribosomal subunit protein bS20 (91 aa).

Positions 1 to 23 (MANTSSAKKATRKIARRTEVNKA) are disordered.

Belongs to the bacterial ribosomal protein bS20 family.

Its function is as follows. Binds directly to 16S ribosomal RNA. This Rhizobium rhizogenes (strain K84 / ATCC BAA-868) (Agrobacterium radiobacter) protein is Small ribosomal subunit protein bS20.